A 393-amino-acid chain; its full sequence is MLRYLTAGESHGPQLTAIIEGMPAGVPLLAEDINRELARRQQGYGRGDRMKIEKDQVEILSGVRWGETLASPLTLVVKNRDWENWSTKMSSLPEFRDESQAVTRPRPGHADLGGALKYGHRDLRNILERSSARETAVRVAVGAAAKALLRLFGIRVGGVVREVGGVVATDPAASFEYIWASAGQSPLFCCDGAAEQEMKRLIDDAKGSGDTLGGVVEVQVIGVPPGLGSHVQWDRKLDARLAMALMSIQAIKGVEVGIGFETARRPGSQVHDEIFRDAARTGADSGGAYYRTSNNAGGIEGGMSNGEAIILRAAMKPIPTLYKPLRSVDMLTHEPFQAAVERSDTCAVPAALVVAEAVVAVEIANAFLEKFGGDSVQEIRRNYQGYCERIRTL.

The NADP(+) site is built by arginine 40 and arginine 46. FMN is bound by residues 129–131, 249–250, glycine 301, 316–320, and arginine 342; these read RSS, QA, and KPIPT.

The protein belongs to the chorismate synthase family. In terms of assembly, homotetramer. FMNH2 is required as a cofactor.

It carries out the reaction 5-O-(1-carboxyvinyl)-3-phosphoshikimate = chorismate + phosphate. It participates in metabolic intermediate biosynthesis; chorismate biosynthesis; chorismate from D-erythrose 4-phosphate and phosphoenolpyruvate: step 7/7. In terms of biological role, catalyzes the anti-1,4-elimination of the C-3 phosphate and the C-6 proR hydrogen from 5-enolpyruvylshikimate-3-phosphate (EPSP) to yield chorismate, which is the branch point compound that serves as the starting substrate for the three terminal pathways of aromatic amino acid biosynthesis. This reaction introduces a second double bond into the aromatic ring system. The polypeptide is Chorismate synthase (Pelobacter propionicus (strain DSM 2379 / NBRC 103807 / OttBd1)).